Here is a 250-residue protein sequence, read N- to C-terminus: MDTAMQLKTSIGLITCRMNTQNNQIETILVQKRYSLAFSEFIHCHYSINANQGHLIKMFNNMTINERLLVKTLDFDRMWYHIWIETPVYELYHKKYQKFRKNWLLPDNGKKLISLINQAKGSGTLLWEIPKGKPKEDESDLTCAIREFEEETGITREYYQILPEFKKSMSYFDGKTEYKHIYFLAMLCKSLEEPNMNLSLQYENRIAEISKISWQNMEAVRFISKRQSLNLEPIIGPAFNFIKNYLRYKH.

Positions 97–243 (QKFRKNWLLP…IIGPAFNFIK (147 aa)) constitute a Nudix hydrolase domain. Positions 132–153 (GKPKEDESDLTCAIREFEEETG) match the Nudix box motif. E138 contacts Mg(2+). Residue E147 is the Nucleophile of the active site. The Mg(2+) site is built by E151 and D173.

Belongs to the Nudix hydrolase family. DIPP subfamily. In terms of assembly, interacts with host RPL23A. Requires Mg(2+) as cofactor. The cofactor is Mn(2+).

The protein localises to the host rough endoplasmic reticulum. It carries out the reaction diphospho-myo-inositol polyphosphate + H2O = myo-inositol polyphosphate + phosphate.. Decapping enzyme required for the removal of the 5'-end m7GpppN cap tethered to viral and host mRNAs to allow their decay in cells. May therefore accelerate viral and cellular mRNA turnover to eliminate competing host mRNAs and allow stage-specific synthesis of viral proteins. Acceleration of the turnover of cellular transcripts may even promote the shutoff of host protein synthesis. In addition to the mRNA cap, g5R also efficiently hydrolyzes diphosphoinositol polyphosphates. Down-regulation of the level of PP-InsP5 (diphosphoinositol pentakisphosphate) may play a role in viral manipulation of the cellular secretory pathway, a step necessary for the formation of virions. Binds viral and cellular poly(A) mRNAs, thereby decreasing both types of mRNAs. This is mRNA-decapping protein g5R from African swine fever virus (isolate Tick/South Africa/Pretoriuskop Pr4/1996) (ASFV).